We begin with the raw amino-acid sequence, 820 residues long: Phenylalanine--tRNA ligase beta subunit (820 aa).

The 113-residue stretch at 42–154 (KGGLEGLVIG…EDAVPGTLAK (113 aa)) folds into the tRNA-binding domain. The B5 domain maps to 413–489 (AQDFIVELTY…RIYGYNNVEI (77 aa)). Residues aspartate 467, aspartate 473, glutamate 476, and aspartate 477 each contribute to the Mg(2+) site. The region spanning 727–820 (SKFPAVKRDL…LEDKLGAKLR (94 aa)) is the FDX-ACB domain.

Belongs to the phenylalanyl-tRNA synthetase beta subunit family. Type 1 subfamily. Tetramer of two alpha and two beta subunits. It depends on Mg(2+) as a cofactor.

The protein localises to the cytoplasm. The enzyme catalyses tRNA(Phe) + L-phenylalanine + ATP = L-phenylalanyl-tRNA(Phe) + AMP + diphosphate + H(+). This Bacteroides fragilis (strain YCH46) protein is Phenylalanine--tRNA ligase beta subunit.